The primary structure comprises 198 residues: Protein GrpE (198 aa).

The disordered stretch occupies residues 1–58 (MTEKDQSVNNEEFAEKEDNTAKDSNTDEQIEKTASEDDVQNDSSAVDDKEKEIQQLKE). Basic and acidic residues-rich tracts occupy residues 16 to 35 (KEDN…KTAS) and 46 to 58 (VDDK…QLKE).

It belongs to the GrpE family. As to quaternary structure, homodimer.

The protein localises to the cytoplasm. In terms of biological role, participates actively in the response to hyperosmotic and heat shock by preventing the aggregation of stress-denatured proteins, in association with DnaK and GrpE. It is the nucleotide exchange factor for DnaK and may function as a thermosensor. Unfolded proteins bind initially to DnaJ; upon interaction with the DnaJ-bound protein, DnaK hydrolyzes its bound ATP, resulting in the formation of a stable complex. GrpE releases ADP from DnaK; ATP binding to DnaK triggers the release of the substrate protein, thus completing the reaction cycle. Several rounds of ATP-dependent interactions between DnaJ, DnaK and GrpE are required for fully efficient folding. This Staphylococcus carnosus (strain TM300) protein is Protein GrpE.